Here is a 3103-residue protein sequence, read N- to C-terminus: Extracellular matrix protein 3 (3103 aa).

The N-terminal stretch at 1–19 (MASALLCFLAAILPGMIAA) is a signal peptide. At 20-3047 (QNTWVLGTSD…TYELAPKGTN (3028 aa)) the chain is on the extracellular side. CSPG repeat units follow at residues 289–388 (PPSL…LEIV), 411–499 (APVV…FRMT), 520–630 (APIV…FRVV), 656–762 (PPEM…FVVQ), 784–875 (QPPT…LEIT), 901–993 (LPPG…LTLS), 1022–1124 (APNV…FRCT), 1145–1238 (EEPQ…VLLT), 1259–1357 (TPRL…FDIT), 1378–1470 (VHPS…FQVT), 1490–1579 (KEPV…FIVT), and 1613–1710 (APQI…VEVR). Residues N330 and N453 are each glycosylated (N-linked (GlcNAc...) asparagine). N-linked (GlcNAc...) asparagine glycosylation is found at N989, N1024, N1042, N1207, N1294, N1321, and N1327. N-linked (GlcNAc...) asparagine glycans are attached at residues N1542, N1674, N1679, N1725, and N1739. Calx-beta domains are found at residues 1717–1816 (LPNQ…IILH), 1829–1942 (AVVT…VKLS), 1956–2062 (NVII…LVLN), and 2077–2179 (ITIN…LVLG). Residues N2080, N2195, N2274, N2385, and N2932 are each glycosylated (N-linked (GlcNAc...) asparagine). A Calx-beta 5 domain is found at 2197 to 2302 (TVVTVHDVGD…MREAFTLHIT (106 aa)). The interval 2983–3013 (SSGIGKRETEHHAISSRQRRQANSEALVDPA) is disordered. Residues 3048–3068 (VVMIAVVIGVILIILLVALVI) traverse the membrane as a helical segment. Residues 3069 to 3103 (GVVVRRRQAKQQPVVVVNGSAKVVSNVHFDDNTEV) are Cytoplasmic-facing.

The protein belongs to the FRAS1 family. Component of extracellular matrix fibers that interact with PMC filopodia during gastrulation (at protein level).

Its subcellular location is the cell membrane. In terms of biological role, extracellular matrix protein that may serve as substrate for the migratory primary mesenchyme cells (PMCs), the interaction possibly providing guidance information to migrating PMCs. In Lytechinus variegatus (Green sea urchin), this protein is Extracellular matrix protein 3 (ECM3).